The sequence spans 160 residues: CXXC motif containing zinc binding protein (160 aa).

Residues Cys-33, Cys-36, Cys-67, and Cys-70 each contribute to the Zn(2+) site. Ser-75 is modified (phosphoserine).

Belongs to the UPF0587 family. In terms of assembly, monomer.

This chain is CXXC motif containing zinc binding protein (Czib), found in Mus musculus (Mouse).